The sequence spans 101 residues: Protein Tat (101 aa).

Over residues 1 to 12 the composition is skewed to basic and acidic residues; the sequence is MEPVDPRLEPWK. Residues 1–24 are disordered; sequence MEPVDPRLEPWKHPGSQPKTASNN. Residues 1–24 form an interaction with human CREBBP region; the sequence is MEPVDPRLEPWKHPGSQPKTASNN. The interval 1-48 is transactivation; that stretch reads MEPVDPRLEPWKHPGSQPKTASNNCYCKRCCLHCQVCFTKKGLGISYG. The cysteine-rich stretch occupies residues 22–37; the sequence is SNNCYCKRCCLHCQVC. Residues Cys25 and Cys27 each coordinate Zn(2+). Lys28 carries the post-translational modification N6-acetyllysine; by host PCAF. Residues Cys30, His33, Cys34, and Cys37 each coordinate Zn(2+). Residues 38 to 48 form a core region; the sequence is FTKKGLGISYG. Residues 45-101 form a disordered region; it reads ISYGRKKRRQRRRAPQDSKTHQVSLSKQPASQPRGDPTGPKESKKKVERETETDPED. The span at 48 to 57 shows a compositional bias: basic residues; that stretch reads GRKKRRQRRR. Residues 49–57 carry the Nuclear localization signal, RNA-binding (TAR), and protein transduction motif; sequence RKKRRQRRR. The segment at 49–86 is interaction with the host capping enzyme RNGTT; it reads RKKRRQRRRAPQDSKTHQVSLSKQPASQPRGDPTGPKE. N6-acetyllysine; by host EP300 and GCN5L2 is present on residues Lys50 and Lys51. Asymmetric dimethylarginine; by host PRMT6 is present on residues Arg52 and Arg53. Positions 65-75 are enriched in polar residues; the sequence is HQVSLSKQPAS. A Glycyl lysine isopeptide (Lys-Gly) (interchain with G-Cter in ubiquitin) cross-link involves residue Lys71. Positions 78–80 match the Cell attachment site motif; the sequence is RGD. Residues 83-101 show a composition bias toward basic and acidic residues; the sequence is GPKESKKKVERETETDPED.

This sequence belongs to the lentiviruses Tat family. As to quaternary structure, interacts with host CCNT1. Associates with the P-TEFb complex composed at least of Tat, P-TEFb (CDK9 and CCNT1), TAR RNA, RNA Pol II. Recruits the HATs CREBBP, TAF1/TFIID, EP300, PCAF and GCN5L2. Interacts with host KAT5/Tip60; this interaction targets the latter to degradation. Interacts with the host deacetylase SIRT1. Interacts with host capping enzyme RNGTT; this interaction stimulates RNGTT. Binds to host KDR, and to the host integrins ITGAV/ITGB3 and ITGA5/ITGB1. Interacts with host KPNB1/importin beta-1 without previous binding to KPNA1/importin alpha-1. Interacts with EIF2AK2. Interacts with host nucleosome assembly protein NAP1L1; this interaction may be required for the transport of Tat within the nucleus, since the two proteins interact at the nuclear rim. Interacts with host C1QBP/SF2P32; this interaction involves lysine-acetylated Tat. Interacts with the host chemokine receptors CCR2, CCR3 and CXCR4. Interacts with host DPP4/CD26; this interaction may trigger an anti-proliferative effect. Interacts with host LDLR. Interacts with the host extracellular matrix metalloproteinase MMP1. Interacts with host PRMT6; this interaction mediates Tat's methylation. Interacts with, and is ubiquitinated by MDM2/Hdm2. Interacts with host PSMC3 and HTATIP2. Interacts with STAB1; this interaction may overcome SATB1-mediated repression of IL2 and IL2RA (interleukin) in T cells by binding to the same domain than HDAC1. Interacts (when acetylated) with human CDK13, thereby increasing HIV-1 mRNA splicing and promoting the production of the doubly spliced HIV-1 protein Nef. Interacts with host TBP; this interaction modulates the activity of transcriptional pre-initiation complex. Interacts with host RELA. Interacts with host PLSCR1; this interaction negatively regulates Tat transactivation activity by altering its subcellular distribution. Post-translationally, asymmetrical arginine methylation by host PRMT6 seems to diminish the transactivation capacity of Tat and affects the interaction with host CCNT1. Acetylation by EP300, CREBBP, GCN5L2/GCN5 and PCAF regulates the transactivation activity of Tat. EP300-mediated acetylation of Lys-50 promotes dissociation of Tat from the TAR RNA through the competitive binding to PCAF's bromodomain. In addition, the non-acetylated Tat's N-terminus can also interact with PCAF. PCAF-mediated acetylation of Lys-28 enhances Tat's binding to CCNT1. Lys-50 is deacetylated by SIRT1. In terms of processing, polyubiquitination by host MDM2 does not target Tat to degradation, but activates its transactivation function and fosters interaction with CCNT1 and TAR RNA. Post-translationally, phosphorylated by EIF2AK2 on serine and threonine residues adjacent to the basic region important for TAR RNA binding and function. Phosphorylation of Tat by EIF2AK2 is dependent on the prior activation of EIF2AK2 by dsRNA.

The protein localises to the host nucleus. It localises to the host nucleolus. It is found in the host cytoplasm. Its subcellular location is the secreted. Transcriptional activator that increases RNA Pol II processivity, thereby increasing the level of full-length viral transcripts. Recognizes a hairpin structure at the 5'-LTR of the nascent viral mRNAs referred to as the transactivation responsive RNA element (TAR) and recruits the cyclin T1-CDK9 complex (P-TEFb complex) that will in turn hyperphosphorylate the RNA polymerase II to allow efficient elongation. The CDK9 component of P-TEFb and other Tat-activated kinases hyperphosphorylate the C-terminus of RNA Pol II that becomes stabilized and much more processive. Other factors such as HTATSF1/Tat-SF1, SUPT5H/SPT5, and HTATIP2 are also important for Tat's function. Besides its effect on RNA Pol II processivity, Tat induces chromatin remodeling of proviral genes by recruiting the histone acetyltransferases (HATs) CREBBP, EP300 and PCAF to the chromatin. This also contributes to the increase in proviral transcription rate, especially when the provirus integrates in transcriptionally silent region of the host genome. To ensure maximal activation of the LTR, Tat mediates nuclear translocation of NF-kappa-B by interacting with host RELA. Through its interaction with host TBP, Tat may also modulate transcription initiation. Tat can reactivate a latently infected cell by penetrating in it and transactivating its LTR promoter. In the cytoplasm, Tat is thought to act as a translational activator of HIV-1 mRNAs. Its function is as follows. Extracellular circulating Tat can be endocytosed by surrounding uninfected cells via the binding to several surface receptors such as CD26, CXCR4, heparan sulfate proteoglycans (HSPG) or LDLR. Neurons are rarely infected, but they internalize Tat via their LDLR. Through its interaction with nuclear HATs, Tat is potentially able to control the acetylation-dependent cellular gene expression. Modulates the expression of many cellular genes involved in cell survival, proliferation or in coding for cytokines or cytokine receptors. Tat plays a role in T-cell and neurons apoptosis. Tat induced neurotoxicity and apoptosis probably contribute to neuroAIDS. Circulating Tat also acts as a chemokine-like and/or growth factor-like molecule that binds to specific receptors on the surface of the cells, affecting many cellular pathways. In the vascular system, Tat binds to ITGAV/ITGB3 and ITGA5/ITGB1 integrins dimers at the surface of endothelial cells and competes with bFGF for heparin-binding sites, leading to an excess of soluble bFGF. The sequence is that of Protein Tat from Homo sapiens (Human).